Consider the following 234-residue polypeptide: CKLF-like MARVEL transmembrane domain-containing protein 4 (234 aa).

The span at 1-11 (MRSGEELDGFE) shows a compositional bias: acidic residues. The disordered stretch occupies residues 1-38 (MRSGEELDGFEGEASSTSMISGASSPYQPTTEPVSQRR). The segment covering 15 to 25 (SSTSMISGASS) has biased composition (low complexity). Residues 49 to 176 (YLRGALGRLK…NTFLAVQKWR (128 aa)) enclose the MARVEL domain. The next 4 helical transmembrane spans lie at 59–79 (VAQVILALIAFICIETIMACS), 85–105 (YFFEFVSCSAFVVTGVLLIMF), 123–143 (LVNTGLSAFLFFIASIVLAAL), and 151–171 (IAAVIFGFLATAAYAVNTFLA). S194 carries the post-translational modification Phosphoserine.

The protein belongs to the chemokine-like factor family. In terms of assembly, interacts with PD-L1/CD274 and CMTM6. As to expression, highly expressed in testis and prostate.

The protein localises to the membrane. In terms of biological role, acts as a backup for CMTM6 to regulate plasma membrane expression of PD-L1/CD274, an immune inhibitory ligand critical for immune tolerance to self and antitumor immunity. May protect PD-L1/CD274 from being polyubiquitinated and targeted for degradation. The protein is CKLF-like MARVEL transmembrane domain-containing protein 4 of Homo sapiens (Human).